The following is a 342-amino-acid chain: Phosphate acyltransferase (342 aa).

It belongs to the PlsX family. As to quaternary structure, homodimer. Probably interacts with PlsY.

The protein localises to the cytoplasm. It carries out the reaction a fatty acyl-[ACP] + phosphate = an acyl phosphate + holo-[ACP]. Its pathway is lipid metabolism; phospholipid metabolism. Its function is as follows. Catalyzes the reversible formation of acyl-phosphate (acyl-PO(4)) from acyl-[acyl-carrier-protein] (acyl-ACP). This enzyme utilizes acyl-ACP as fatty acyl donor, but not acyl-CoA. In Shewanella sp. (strain ANA-3), this protein is Phosphate acyltransferase.